The chain runs to 636 residues: Methyl-CpG-binding domain protein 1 (636 aa).

An MBD domain is found at 1-69; sequence MAESWQDCPA…TLFDFRQGTL (69 aa). Residues 75–113 form a disordered region; sequence KTHPLAVPSKKKKKPSKPAKTKKQQVGLQRSEVRIETPQ. Residues 83–97 show a composition bias toward basic residues; the sequence is SKKKKKPSKPAKTKK. The Nuclear localization signal signature appears at 84-88; sequence KKKKK. Lys-117 participates in a covalent cross-link: Glycyl lysine isopeptide (Lys-Gly) (interchain with G-Cter in SUMO2). CXXC-type zinc fingers lie at residues 187 to 234 and 235 to 281; these read RMFK…RRCL and RIME…RRCF. Residues Cys-194, Cys-197, Cys-200, Cys-206, Cys-209, Cys-212, Cys-228, Cys-233, Cys-243, Cys-246, Cys-249, Cys-255, Cys-258, Cys-261, Cys-275, and Cys-280 each contribute to the Zn(2+) site. The interval 291–314 is disordered; sequence GSKVASQRHSQAPPLPPHPASQYT. Lys-293 is covalently cross-linked (Glycyl lysine isopeptide (Lys-Gly) (interchain with G-Cter in SUMO2)). Residues 348–396 form a CXXC-type 3 zinc finger; that stretch reads TNQRQNRKCGACAACLRRMDCGRCDFCCDKPKFGGGNQKRQKCRWRQCL. Residues Cys-356, Cys-359, Cys-362, Cys-368, Cys-371, Cys-374, Cys-390, and Cys-395 each contribute to the Zn(2+) site. The interval 407–474 is disordered; sequence AGSGSGEGAG…GRGSVLPQPD (68 aa). Position 409 is a phosphoserine (Ser-409). Residues Lys-443 and Lys-461 each participate in a glycyl lysine isopeptide (Lys-Gly) (interchain with G-Cter in SUMO2) cross-link. Residues Lys-520 and Lys-559 each participate in a glycyl lysine isopeptide (Lys-Gly) (interchain with G-Cter in SUMO2); alternate cross-link. The tract at residues 543 to 589 is disordered; it reads QSGFPSKAADPDLSPVKQEPPGPEEDGEEKKDDVSETTPAEEIGGVG. The transcriptional repression domain (TRD) stretch occupies residues 550-612; that stretch reads AADPDLSPVK…RLRDAEAWLP (63 aa).

In terms of assembly, interacts with OASL, ATF7IP, ATF7IP2 and BAHD1. Binds CHAF1A and the SUV39H1-CBX5 complex via the MBD domain. Binds MGP via the TRD domain. May be part of the MeCP1 complex. During DNA replication, it recruits SETDB1 to form a S phase-specific complex that facilitates methylation of H3 'Lys-9' during replication-coupled chromatin assembly and is at least composed of the CAF-1 subunit CHAF1A, MBD1 and SETDB1. As to quaternary structure, interacts with the Ten-1 ICD form of TENM1. In terms of processing, sumoylated, sumoylation may increase interaction with ATF7IP. Highly expressed in kidney, liver and brain. Detected at lower levels in heart, lung, skeletal muscle, spleen and testis.

Its subcellular location is the nucleus. The protein localises to the nucleus matrix. It localises to the nucleus speckle. The protein resides in the chromosome. Transcriptional repressor that binds CpG islands in promoters where the DNA is methylated at position 5 of cytosine within CpG dinucleotides. Binding is abolished by the presence of 7-mG that is produced by DNA damage by methylmethanesulfonate (MMS). Acts as transcriptional repressor and plays a role in gene silencing by recruiting ATF7IP, which in turn recruits factors such as the histone methyltransferase SETDB1. Probably forms a complex with SETDB1 and ATF7IP that represses transcription and couples DNA methylation and histone 'Lys-9' trimethylation. Isoform 1 can also repress transcription from unmethylated promoters. The chain is Methyl-CpG-binding domain protein 1 from Mus musculus (Mouse).